The primary structure comprises 303 residues: RING finger protein 148 (303 aa).

Residues 1-34 (MSLLRITSSAHSSASSRLWRLGIFLLLSLPDSKG) form the signal peptide. N-linked (GlcNAc...) asparagine glycosylation occurs at N43. Positions 65-167 (HSPLERVSGV…LKGMELLHLI (103 aa)) constitute a PA domain. Residues 186-208 (WLSHYIMSLFTFLTATVAYLFLY) traverse the membrane as a helical segment. Residues 256–297 (CVVCFDIYKPQDVVRILTCKHIFHKACIDPWLLAHRTCPMCK) form an RING-type; atypical zinc finger.

The protein localises to the membrane. In Bos taurus (Bovine), this protein is RING finger protein 148 (RNF148).